A 323-amino-acid chain; its full sequence is Lipoyl synthase (323 aa).

Positions 61, 66, 72, 87, 91, 94, and 300 each coordinate [4Fe-4S] cluster. The Radical SAM core domain occupies 73-289 (WDKKHATFMI…ETVAYSKGFL (217 aa)).

It belongs to the radical SAM superfamily. Lipoyl synthase family. It depends on [4Fe-4S] cluster as a cofactor.

It localises to the cytoplasm. The enzyme catalyses [[Fe-S] cluster scaffold protein carrying a second [4Fe-4S](2+) cluster] + N(6)-octanoyl-L-lysyl-[protein] + 2 oxidized [2Fe-2S]-[ferredoxin] + 2 S-adenosyl-L-methionine + 4 H(+) = [[Fe-S] cluster scaffold protein] + N(6)-[(R)-dihydrolipoyl]-L-lysyl-[protein] + 4 Fe(3+) + 2 hydrogen sulfide + 2 5'-deoxyadenosine + 2 L-methionine + 2 reduced [2Fe-2S]-[ferredoxin]. It functions in the pathway protein modification; protein lipoylation via endogenous pathway; protein N(6)-(lipoyl)lysine from octanoyl-[acyl-carrier-protein]: step 2/2. Its function is as follows. Catalyzes the radical-mediated insertion of two sulfur atoms into the C-6 and C-8 positions of the octanoyl moiety bound to the lipoyl domains of lipoate-dependent enzymes, thereby converting the octanoylated domains into lipoylated derivatives. The protein is Lipoyl synthase of Rhizobium etli (strain ATCC 51251 / DSM 11541 / JCM 21823 / NBRC 15573 / CFN 42).